The sequence spans 152 residues: SXP/RAL-2 family protein Ani s 5 (152 aa).

The first 18 residues, 1-18 (MKTLIVAALFCTIGMALA), serve as a signal peptide directing secretion. 4 necessary for IgE-binding regions span residues 25-42 (PPFL…FFEL), 49-54 (KTDPEI), 58-66 (LDAWVDTLG), and 103-120 (KKAD…SLNG). IgG4-binding stretches follow at residues 49–68 (KTDP…LGGD) and 118–137 (LNGI…LPQS). Residues 127–146 (IQAIYKTLPQSVKDELEKGI) form an igE-binding and IgG4-binding region.

The protein belongs to the SXP/RAL-2 family. Monomer. In terms of tissue distribution, excretory gland, ventriculus, and the luminal epithelium of the intestine of the larvae.

It is found in the secreted. The chain is SXP/RAL-2 family protein Ani s 5 from Anisakis simplex (Herring worm).